A 1220-amino-acid chain; its full sequence is DNA-directed RNA polymerase subunit beta (1220 aa).

It belongs to the RNA polymerase beta chain family. As to quaternary structure, the RNAP catalytic core consists of 2 alpha, 1 beta, 1 beta' and 1 omega subunit. When a sigma factor is associated with the core the holoenzyme is formed, which can initiate transcription.

The catalysed reaction is RNA(n) + a ribonucleoside 5'-triphosphate = RNA(n+1) + diphosphate. Its function is as follows. DNA-dependent RNA polymerase catalyzes the transcription of DNA into RNA using the four ribonucleoside triphosphates as substrates. This chain is DNA-directed RNA polymerase subunit beta, found in Mesomycoplasma hyopneumoniae (strain 232) (Mycoplasma hyopneumoniae).